Reading from the N-terminus, the 335-residue chain is Probable calcium-binding protein CML49 (335 aa).

Residues 1–10 (MSGYPPSSQG) are compositionally biased toward low complexity. The disordered stretch occupies residues 1–154 (MSGYPPSSQG…PQASYGSPFA (154 aa)). The span at 30-45 (NPPPYGSSGSNPPPPY) shows a compositional bias: pro residues. The segment covering 46–63 (GSSASSPYAVPYGAQPAP) has biased composition (low complexity). Residues 110 to 141 (DYGGYGGAPQQSGHGGGYGGAPQQSGHGGGYG) are compositionally biased toward gly residues. EF-hand domains follow at residues 164 to 199 (GTDPNIVACFQAADRDNSGFIDDKELQGALSSYNQS) and 230 to 265 (FSLQNWRSIFERFDKDRSGRIDTNELRDALMSLGFS). 9 residues coordinate Ca(2+): D177, D179, S181, E188, D243, D245, S247, R249, and E254.

Its function is as follows. Potential calcium sensor. This Arabidopsis thaliana (Mouse-ear cress) protein is Probable calcium-binding protein CML49 (CML49).